Here is a 321-residue protein sequence, read N- to C-terminus: uncharacterized protein (321 aa).

This is an uncharacterized protein from Acanthamoeba polyphaga mimivirus (APMV).